We begin with the raw amino-acid sequence, 198 residues long: Glycerol-3-phosphate acyltransferase (198 aa).

Transmembrane regions (helical) follow at residues 6 to 26, 56 to 78, 83 to 101, 113 to 133, and 154 to 174; these read MLPVALLIGYLLGSIPFGLIL, LAAATLLGDALKGTAAVIIAGYL, AAMLAGLGAFLGHLFPVWL, IGILIGLLWPYAIFFCLVWLA, and IVLWAFGHTALAALFALLTLL.

It belongs to the PlsY family. As to quaternary structure, probably interacts with PlsX.

The protein localises to the cell inner membrane. It carries out the reaction an acyl phosphate + sn-glycerol 3-phosphate = a 1-acyl-sn-glycero-3-phosphate + phosphate. It participates in lipid metabolism; phospholipid metabolism. In terms of biological role, catalyzes the transfer of an acyl group from acyl-phosphate (acyl-PO(4)) to glycerol-3-phosphate (G3P) to form lysophosphatidic acid (LPA). This enzyme utilizes acyl-phosphate as fatty acyl donor, but not acyl-CoA or acyl-ACP. The sequence is that of Glycerol-3-phosphate acyltransferase from Bradyrhizobium sp. (strain ORS 278).